Consider the following 464-residue polypeptide: 3-isopropylmalate dehydratase large subunit (464 aa).

Residues Cys337, Cys397, and Cys400 each coordinate [4Fe-4S] cluster.

This sequence belongs to the aconitase/IPM isomerase family. LeuC type 1 subfamily. Heterodimer of LeuC and LeuD. [4Fe-4S] cluster is required as a cofactor.

It catalyses the reaction (2R,3S)-3-isopropylmalate = (2S)-2-isopropylmalate. The protein operates within amino-acid biosynthesis; L-leucine biosynthesis; L-leucine from 3-methyl-2-oxobutanoate: step 2/4. Catalyzes the isomerization between 2-isopropylmalate and 3-isopropylmalate, via the formation of 2-isopropylmaleate. This chain is 3-isopropylmalate dehydratase large subunit, found in Bacillus cereus (strain ATCC 10987 / NRS 248).